A 558-amino-acid chain; its full sequence is Glutamine--tRNA ligase (558 aa).

The 'HIGH' region motif lies at 36-46 (PEPNGYLHLGH). Residues 37–39 (EPN) and 43–49 (HLGHAKS) each bind ATP. L-glutamine contacts are provided by Asp-69 and Tyr-214. ATP-binding positions include Thr-233, 263-264 (RL), and 271-273 (LSK). Residues 270-274 (LLSKR) carry the 'KMSKS' region motif.

This sequence belongs to the class-I aminoacyl-tRNA synthetase family. In terms of assembly, monomer.

It is found in the cytoplasm. It carries out the reaction tRNA(Gln) + L-glutamine + ATP = L-glutaminyl-tRNA(Gln) + AMP + diphosphate. In Nitrobacter hamburgensis (strain DSM 10229 / NCIMB 13809 / X14), this protein is Glutamine--tRNA ligase.